We begin with the raw amino-acid sequence, 881 residues long: DNA mismatch repair protein MutS (881 aa).

632 to 639 is a binding site for ATP; sequence GPNMGGKS.

This sequence belongs to the DNA mismatch repair MutS family.

In terms of biological role, this protein is involved in the repair of mismatches in DNA. It is possible that it carries out the mismatch recognition step. This protein has a weak ATPase activity. The polypeptide is DNA mismatch repair protein MutS (Chelativorans sp. (strain BNC1)).